Here is a 334-residue protein sequence, read N- to C-terminus: Catabolite repressor/activator (334 aa).

In terms of domain architecture, HTH lacI-type spans 1-58; it reads MKLDEIARLAGVSRTTASYVINGKAKQYRVSDKTVEKVMAVVREHNYHPNAVAAGLRA. A DNA-binding region (H-T-H motif) is located at residues 3-22; the sequence is LDEIARLAGVSRTTASYVIN.

In terms of assembly, homotetramer.

Functionally, global transcriptional regulator, which plays an important role in the regulation of carbon metabolism. The protein is Catabolite repressor/activator (cra) of Escherichia coli O157:H7.